We begin with the raw amino-acid sequence, 1057 residues long: Carbamoyl phosphate synthase large chain (1057 aa).

A carboxyphosphate synthetic domain region spans residues 1 to 401; sequence MPKRQDIETI…SLLKAIRSLE (401 aa). Positions 129, 169, 175, 176, 208, 210, 215, 241, 242, 243, 284, and 298 each coordinate ATP. Residues 133-327 enclose the ATP-grasp 1 domain; the sequence is RTLMNDLGVP…IAKLAAKIAI (195 aa). Residues Q284, E298, and N300 each coordinate Mg(2+). Q284, E298, and N300 together coordinate Mn(2+). Residues 402–546 form an oligomerization domain region; sequence YGVHHLGLPN…YGTYEYENES (145 aa). The tract at residues 547–929 is carbamoyl phosphate synthetic domain; the sequence is VVTEKEKILV…ALFKGLTASG (383 aa). The ATP-grasp 2 domain occupies 671-861; the sequence is EALLHTIDVP…MAQLAMRAII (191 aa). The ATP site is built by R707, R746, L748, E752, G777, V778, H779, S780, Q820, and E832. 3 residues coordinate Mg(2+): Q820, E832, and N834. Positions 820, 832, and 834 each coordinate Mn(2+). In terms of domain architecture, MGS-like spans 930-1057; the sequence is MEVKDHGTVL…ESMTFTMKNM (128 aa). Residues 930–1057 form an allosteric domain region; that stretch reads MEVKDHGTVL…ESMTFTMKNM (128 aa).

Belongs to the CarB family. In terms of assembly, composed of two chains; the small (or glutamine) chain promotes the hydrolysis of glutamine to ammonia, which is used by the large (or ammonia) chain to synthesize carbamoyl phosphate. Tetramer of heterodimers (alpha,beta)4. The cofactor is Mg(2+). Mn(2+) is required as a cofactor.

It carries out the reaction hydrogencarbonate + L-glutamine + 2 ATP + H2O = carbamoyl phosphate + L-glutamate + 2 ADP + phosphate + 2 H(+). The enzyme catalyses hydrogencarbonate + NH4(+) + 2 ATP = carbamoyl phosphate + 2 ADP + phosphate + 2 H(+). Its pathway is amino-acid biosynthesis; L-arginine biosynthesis; carbamoyl phosphate from bicarbonate: step 1/1. It functions in the pathway pyrimidine metabolism; UMP biosynthesis via de novo pathway; (S)-dihydroorotate from bicarbonate: step 1/3. Large subunit of the glutamine-dependent carbamoyl phosphate synthetase (CPSase). CPSase catalyzes the formation of carbamoyl phosphate from the ammonia moiety of glutamine, carbonate, and phosphate donated by ATP, constituting the first step of 2 biosynthetic pathways, one leading to arginine and/or urea and the other to pyrimidine nucleotides. The large subunit (synthetase) binds the substrates ammonia (free or transferred from glutamine from the small subunit), hydrogencarbonate and ATP and carries out an ATP-coupled ligase reaction, activating hydrogencarbonate by forming carboxy phosphate which reacts with ammonia to form carbamoyl phosphate. The protein is Carbamoyl phosphate synthase large chain of Staphylococcus saprophyticus subsp. saprophyticus (strain ATCC 15305 / DSM 20229 / NCIMB 8711 / NCTC 7292 / S-41).